Reading from the N-terminus, the 81-residue chain is Protein Vpu (81 aa).

The Extracellular portion of the chain corresponds to 1-7 (MQPSQII). Residues 8 to 28 (AIAALVVAAIIAIVVWTIVFI) traverse the membrane as a helical segment. Residues 29–81 (EYRRIKRQRKIDCIIDRIRERAEDSGNESEGDREELSKLVEMGHHAPWDIDDL) are Cytoplasmic-facing. Phosphoserine; by host CK2 occurs at positions 53 and 57.

It belongs to the HIV-1 VPU protein family. Homopentamer. Interacts with host CD4 and BRTC; these interactions induce proteasomal degradation of CD4. Interacts with host BST2; this interaction leads to the degradation of host BST2. Interacts with host FBXW11. Interacts with host AP1M1; this interaction plays a role in the mistrafficking and subsequent degradation of host BST2. Interacts with host RANBP2; this interaction allows Vpu to down-regulate host BLM sumoylation. In terms of processing, phosphorylated by host CK2. This phosphorylation is necessary for interaction with human BTRC and degradation of CD4.

Its subcellular location is the host membrane. With respect to regulation, ion channel activity is inhibited by hexamethylene amiloride in vitro. Enhances virion budding by targeting host CD4 and Tetherin/BST2 to proteasome degradation. Degradation of CD4 prevents any unwanted premature interactions between viral Env and its host receptor CD4 in the endoplasmic reticulum. Degradation of antiretroviral protein Tetherin/BST2 is important for virion budding, as BST2 tethers new viral particles to the host cell membrane. Mechanistically, Vpu bridges either CD4 or BST2 to BTRC, a substrate recognition subunit of the Skp1/Cullin/F-box protein E3 ubiquitin ligase, induces their ubiquitination and subsequent proteasomal degradation. The alteration of the E3 ligase specificity by Vpu seems to promote the degradation of host IKBKB, leading to NF-kappa-B down-regulation and subsequent apoptosis. Acts as a viroporin that forms an oligomeric ion channel in membranes. Modulates the host DNA repair mechanisms to promote degradation of nuclear viral cDNA in cells that are already productively infected in order to suppress immune sensing and proviral hyper-integration (superinfection). Manipulates PML-NBs and modulates SUMOylation of host BLM protein thereby enhancing its DNA-end processing activity toward viral unintegrated linear DNA. Also inhibits RAD52-mediated homologous repair of viral cDNA, preventing the generation of dead-end circular forms of single copies of the long terminal repeat and permitting sustained nucleolytic attack. This Homo sapiens (Human) protein is Protein Vpu.